We begin with the raw amino-acid sequence, 669 residues long: Trifunctional UDP-glucose 4,6-dehydratase/UDP-4-keto-6-deoxy-D-glucose 3,5-epimerase/UDP-4-keto-L-rhamnose-reductase RHM1 (669 aa).

13 to 19 (GAAGFIA) provides a ligand contact to NAD(+). Threonine 132 is a binding site for substrate. The Proton donor role is filled by aspartate 133. Catalysis depends on proton acceptor residues glutamate 134 and tyrosine 159. 391–397 (GKTGWIG) contributes to the NADP(+) binding site.

In the N-terminal section; belongs to the NAD(P)-dependent epimerase/dehydratase family. dTDP-glucose dehydratase subfamily. This sequence in the C-terminal section; belongs to the dTDP-4-dehydrorhamnose reductase family. NAD(+) serves as cofactor. It depends on NADP(+) as a cofactor. Expressed in roots, stems, leaves, seedlings, inflorescence tips, and siliques. Detected in the adaxial side of cotyledons, in the emerging leaves and in trichomes. Also detected in the root tip, more precisely in the epidermal cells in the meristematic and elongation zone.

The protein resides in the cytoplasm. It is found in the cytosol. The enzyme catalyses UDP-alpha-D-glucose = UDP-4-dehydro-6-deoxy-alpha-D-glucose + H2O. The protein operates within carbohydrate biosynthesis. Functionally, trifunctional enzyme involved in UDP-beta-L-rhamnose biosynthesis, a precursor of the primary cell wall components rhamnogalacturonan I (RG-I) and rhamnogalacturonan II (RG-II). Plays a major role in supplying UDP-rhamnose for flavonol biosynthesis. Catalyzes the dehydration of UDP-glucose to form UDP-4-dehydro-6-deoxy-D-glucose followed by the epimerization of the C3' and C5' positions of UDP-4-dehydro-6-deoxy-D-glucose to form UDP-4-keto-beta-L-rhamnose and the reduction of UDP-4-keto-beta-L-rhamnose to yield UDP-beta-L-rhamnose. This Arabidopsis thaliana (Mouse-ear cress) protein is Trifunctional UDP-glucose 4,6-dehydratase/UDP-4-keto-6-deoxy-D-glucose 3,5-epimerase/UDP-4-keto-L-rhamnose-reductase RHM1.